Consider the following 175-residue polypeptide: uncharacterized protein (175 aa).

This is an uncharacterized protein from Acanthamoeba polyphaga mimivirus (APMV).